Consider the following 841-residue polypeptide: Translation initiation factor IF-2 (841 aa).

Positions 94 to 255 (QRSPEEIEAE…RNAHGFQSPT (162 aa)) are disordered. A compositionally biased stretch (basic and acidic residues) spans 96 to 135 (SPEEIEAERKREMDERRAVENAARQKAEEEAKRRAEEDAR). Residues 136 to 175 (NQPAAGQPASAPAQPVAAAEPVREAPAAAAPAPASAAPSA) show a composition bias toward low complexity. Basic and acidic residues-rich tracts occupy residues 176 to 217 (DARK…EKAP) and 225 to 234 (TTDEESDSFR). Residues 235–248 (RGGRGKGKLKKRNA) show a composition bias toward basic residues. Residues 341–510 (SRAPVVTVMG…LLQAEVLELK (170 aa)) enclose the tr-type G domain. A G1 region spans residues 350–357 (GHVDHGKT). 350-357 (GHVDHGKT) is a GTP binding site. The G2 stretch occupies residues 375–379 (GITQH). A G3 region spans residues 396-399 (DTPG). GTP is bound by residues 396 to 400 (DTPGH) and 450 to 453 (NKID). The tract at residues 450 to 453 (NKID) is G4. The segment at 486–488 (SAK) is G5.

This sequence belongs to the TRAFAC class translation factor GTPase superfamily. Classic translation factor GTPase family. IF-2 subfamily.

The protein resides in the cytoplasm. One of the essential components for the initiation of protein synthesis. Protects formylmethionyl-tRNA from spontaneous hydrolysis and promotes its binding to the 30S ribosomal subunits. Also involved in the hydrolysis of GTP during the formation of the 70S ribosomal complex. This chain is Translation initiation factor IF-2, found in Pseudomonas syringae pv. tomato (strain ATCC BAA-871 / DC3000).